The following is a 78-amino-acid chain: UPF0349 protein RBAM_029300 (78 aa).

It belongs to the UPF0349 family.

This chain is UPF0349 protein RBAM_029300, found in Bacillus velezensis (strain DSM 23117 / BGSC 10A6 / LMG 26770 / FZB42) (Bacillus amyloliquefaciens subsp. plantarum).